The following is a 522-amino-acid chain: Glutamyl-tRNA(Gln) amidotransferase subunit A (522 aa).

Catalysis depends on charge relay system residues Lys88 and Ser163. The active-site Acyl-ester intermediate is the Ser187.

The protein belongs to the amidase family. GatA subfamily. As to quaternary structure, heterotrimer of A, B and C subunits.

It carries out the reaction L-glutamyl-tRNA(Gln) + L-glutamine + ATP + H2O = L-glutaminyl-tRNA(Gln) + L-glutamate + ADP + phosphate + H(+). Its function is as follows. Allows the formation of correctly charged Gln-tRNA(Gln) through the transamidation of misacylated Glu-tRNA(Gln) in organisms which lack glutaminyl-tRNA synthetase. The reaction takes place in the presence of glutamine and ATP through an activated gamma-phospho-Glu-tRNA(Gln). This is Glutamyl-tRNA(Gln) amidotransferase subunit A from Paenarthrobacter aurescens (strain TC1).